The sequence spans 476 residues: MAMKIGTAAFKERVSEGIDNEFMRGAVSGAQERLRTRRLQAAEELGNWEDWRSHAEEIRQHVLDNLDFYLEQLAENVANRGGHVFFAETAEEASSYIRDVIRQKNAKKIVKSKSMVTEEINMNEVLEEEGCEVTETDLGEYILQIDDHDPPSHIVAPALHKNKEQIRDVFKERLEYKQTEKPEELVMHARSVLRKKFLEADVGITGCNFAIADTGSVSLVTNEGNGRLVSALPKTQITVMGMERIVPSFSEFEVLVSMLTRSAVGQRLTSYITALTGPRQQGEADGPEEFHLVVVDNGRSRILGTEFQSVLQCIRCAACINVCPVYRHVGGHSYGSIYSGPIGAVLSPLLGGYDEYKELPYASSLCAACTEACPVKIPLHELLLKHRQNIVEKEGKAPISEKLAMKAFGLGSSSPSLYKMGSKWAPAAMTPFTEDDKISKGPGPLKEWTAIRDFPAPHKSRFRDWFKDREKQKGEE.

2 4Fe-4S ferredoxin-type domains span residues Gly304–Tyr334 and Tyr353–Leu382. The [4Fe-4S] cluster site is built by Cys313, Cys316, Cys319, Cys323, Cys366, Cys369, and Cys373.

This sequence belongs to the LutB/YkgF family.

Functionally, is involved in L-lactate degradation and allows cells to grow with lactate as the sole carbon source. Has probably a role as an electron transporter during oxidation of L-lactate. The polypeptide is Lactate utilization protein B (Bacillus velezensis (strain DSM 23117 / BGSC 10A6 / LMG 26770 / FZB42) (Bacillus amyloliquefaciens subsp. plantarum)).